A 398-amino-acid chain; its full sequence is Lysophospholipid transporter LplT (398 aa).

Helical transmembrane passes span 16–36 (MIAV…LLFA), 53–73 (ILQM…GQVA), 91–111 (AGAL…LVGV), 139–159 (LMEA…GILA), 163–183 (IVAA…ANLY), 195–213 (SWTP…VVLW), 227–247 (LFWG…PVAL), 253–273 (ATPT…AGAA), 286–306 (MPAG…TTLF), 310–330 (ALLL…NALL), 344–364 (IAVQ…LYSL), and 372–392 (VVGV…ALWL).

This sequence belongs to the major facilitator superfamily. LplT (TC 2.A.1.42) family.

The protein localises to the cell inner membrane. In terms of biological role, catalyzes the facilitated diffusion of 2-acyl-glycero-3-phosphoethanolamine (2-acyl-GPE) into the cell. This chain is Lysophospholipid transporter LplT, found in Serratia proteamaculans (strain 568).